The chain runs to 338 residues: Fructose-1,6-bisphosphatase 1 (338 aa).

At T2 the chain carries N-acetylthreonine. AMP is bound by residues 18 to 22 (VMEEG) and 28 to 32 (TGEMT). Mg(2+) contacts are provided by D69 and E98. 113–114 (KY) provides a ligand contact to AMP. Residues D119, L121, and D122 each coordinate Mg(2+). Residue 122 to 125 (DGSS) participates in substrate binding. K141 serves as a coordination point for AMP. K151 carries the N6-succinyllysine modification. S208 carries the phosphoserine modification. Residues 213 to 216 (NEGY), 244 to 249 (RYVGSM), Y265, and 275 to 277 (KLR) each bind substrate. Phosphotyrosine occurs at positions 216, 245, and 265. E281 serves as a coordination point for Mg(2+).

Belongs to the FBPase class 1 family. In terms of assembly, homotetramer. Requires Mg(2+) as cofactor.

The catalysed reaction is beta-D-fructose 1,6-bisphosphate + H2O = beta-D-fructose 6-phosphate + phosphate. The protein operates within carbohydrate biosynthesis; gluconeogenesis. Subject to complex allosteric regulation. The enzyme can assume an active R-state, or an inactive T-state. Intermediate conformations may exist. AMP acts as an allosteric inhibitor. AMP binding affects the turnover of bound substrate and not the affinity for substrate. Fructose 2,6-bisphosphate acts as a competitive inhibitor. Fructose 2,6-bisphosphate and AMP have synergistic effects. Catalyzes the hydrolysis of fructose 1,6-bisphosphate to fructose 6-phosphate in the presence of divalent cations, acting as a rate-limiting enzyme in gluconeogenesis. Plays a role in regulating glucose sensing and insulin secretion of pancreatic beta-cells. Appears to modulate glycerol gluconeogenesis in liver. Important regulator of appetite and adiposity; increased expression of the protein in liver after nutrient excess increases circulating satiety hormones and reduces appetite-stimulating neuropeptides and thus seems to provide a feedback mechanism to limit weight gain. This Bos taurus (Bovine) protein is Fructose-1,6-bisphosphatase 1 (FBP1).